The chain runs to 695 residues: MDRRRWVPSTPVVTLLLLFMLFAPAPRLPSRNGESSEKSIKAEKRAFSEIKNATFLNIPERVEHSLTFPTEIWETRDGLFEEPVGKGDSHLNHTSVMTGNWNILPYPSFGKVSPNVTWHTTLRNIVMSQSGRFSANLYEYVDGNSDGISFVLNLENNNDTSVYHMTFHGDRVKPINVFLGSTDVTPNFGGVDVIPWLLKDSPYKDAPPLDGTEYFPLLQNRSLERIETRLQDAQTVGWSPLVFEEEEVTCSAFVFLHNKNTGLDKETLKAIENEFYHPQGVSTQKMPEVFVSGLVYSPDCNVAFTFSNTKGPRNFVLENHLVRFSSLYIFIVLSQIFVLLRQMRINSPSHVQRLSFLTIAMQAGLDAYIAIFFLSTNAVIEKGYLPFVSVAFLSLVPSVMFTMRYLALILRVQNSNMPPPAPRPVTNNSSNNNTNQSNASNENSPNAPSAANDNTETTTVNPPQEDDQPMTQHERDQRDWSAVCLRFYFIILVVCIASLYSAFWPVIYRFYFISALIFTSYSFWIPQIIQNVKQGTSRSFTWTYILGASVLRLYLPLAIFIDSELILGFPPKYFFALGLVLWMLFQVLVLLVQDTLGPRFFLPKKFFLSSPVYDYHPVIQQDDLEAFMRDANVCPICMQPIELVSTGSTLNPASMMVRRNYMLTPCHHLYHRQCLLQWMETRSICPVCRCHLPAV.

A signal peptide spans 1-25 (MDRRRWVPSTPVVTLLLLFMLFAPA). Residues 26-319 (PRLPSRNGES…KGPRNFVLEN (294 aa)) are Lumenal-facing. A helical membrane pass occupies residues 320–340 (HLVRFSSLYIFIVLSQIFVLL). Topologically, residues 341 to 353 (RQMRINSPSHVQR) are cytoplasmic. A helical membrane pass occupies residues 354-374 (LSFLTIAMQAGLDAYIAIFFL). At 375–382 (STNAVIEK) the chain is on the lumenal side. The chain crosses the membrane as a helical span at residues 383–403 (GYLPFVSVAFLSLVPSVMFTM). Topologically, residues 404 to 486 (RYLALILRVQ…QRDWSAVCLR (83 aa)) are cytoplasmic. The disordered stretch occupies residues 419-473 (PPAPRPVTNNSSNNNTNQSNASNENSPNAPSAANDNTETTTVNPPQEDDQPMTQH). Residues 427–454 (NNSSNNNTNQSNASNENSPNAPSAANDN) are compositionally biased toward low complexity. The chain crosses the membrane as a helical span at residues 487–507 (FYFIILVVCIASLYSAFWPVI). Over 508–509 (YR) the chain is Lumenal. The chain crosses the membrane as a helical span at residues 510–530 (FYFISALIFTSYSFWIPQIIQ). Over 531-540 (NVKQGTSRSF) the chain is Cytoplasmic. Residues 541-561 (TWTYILGASVLRLYLPLAIFI) traverse the membrane as a helical segment. Residues 562 to 572 (DSELILGFPPK) are Lumenal-facing. The chain crosses the membrane as a helical span at residues 573–593 (YFFALGLVLWMLFQVLVLLVQ). The Cytoplasmic portion of the chain corresponds to 594-695 (DTLGPRFFLP…PVCRCHLPAV (102 aa)). Residues 634 to 689 (CPICMQPIELVSTGSTLNPASMMVRRNYMLTPCHHLYHRQCLLQWMETRSICPVCR) form an RING-type; atypical zinc finger.

Component of the DSC E3 ubiquitin ligase complex composed of dsc1, dsc2, dsc3 and dsc4.

The protein resides in the endoplasmic reticulum membrane. It localises to the golgi apparatus membrane. It carries out the reaction S-ubiquitinyl-[E2 ubiquitin-conjugating enzyme]-L-cysteine + [acceptor protein]-L-lysine = [E2 ubiquitin-conjugating enzyme]-L-cysteine + N(6)-ubiquitinyl-[acceptor protein]-L-lysine.. The protein operates within protein modification; protein ubiquitination. Its function is as follows. Catalytic component of the DSC E3 ubiquitin ligase complex which is required for the sre1 transcriptional activator proteolytic cleavage to release the soluble transcription factor from the membrane in low oxygen or sterol conditions. The complex also plays an important role in the multivesicular body (MVB) pathway and functions in a post-endoplasmic reticulum pathway for protein degradation. This chain is DSC E3 ubiquitin ligase complex subunit 1 (dsc1), found in Schizosaccharomyces pombe (strain 972 / ATCC 24843) (Fission yeast).